A 232-amino-acid polypeptide reads, in one-letter code: Ion-translocating oxidoreductase complex subunit E (232 aa).

Helical transmembrane passes span 18–38 (GLVQ…LTNA), 39–59 (IGLG…VSLV), 69–89 (IPVF…LINA), 93–113 (GLYL…VIIG), 127–147 (AAFD…LLGA), and 182–202 (NFLL…LIAI).

Belongs to the NqrDE/RnfAE family. The complex is composed of six subunits: RnfA, RnfB, RnfC, RnfD, RnfE and RnfG.

It is found in the cell inner membrane. In terms of biological role, part of a membrane-bound complex that couples electron transfer with translocation of ions across the membrane. In Shewanella loihica (strain ATCC BAA-1088 / PV-4), this protein is Ion-translocating oxidoreductase complex subunit E.